A 360-amino-acid chain; its full sequence is Aminomethyltransferase (360 aa).

It belongs to the GcvT family. In terms of assembly, the glycine cleavage system is composed of four proteins: P, T, L and H.

The enzyme catalyses N(6)-[(R)-S(8)-aminomethyldihydrolipoyl]-L-lysyl-[protein] + (6S)-5,6,7,8-tetrahydrofolate = N(6)-[(R)-dihydrolipoyl]-L-lysyl-[protein] + (6R)-5,10-methylene-5,6,7,8-tetrahydrofolate + NH4(+). In terms of biological role, the glycine cleavage system catalyzes the degradation of glycine. The chain is Aminomethyltransferase from Exiguobacterium sibiricum (strain DSM 17290 / CCUG 55495 / CIP 109462 / JCM 13490 / 255-15).